Consider the following 316-residue polypeptide: Acetyl-coenzyme A carboxylase carboxyl transferase subunit beta (316 aa).

Residues 39-308 (LWHKCSKCGV…PPHMVLWETM (270 aa)) form the CoA carboxyltransferase N-terminal domain. The Zn(2+) site is built by C43, C46, C62, and C65. A C4-type zinc finger spans residues 43–65 (CSKCGVLAYTKDLKANQMVCIEC).

Belongs to the AccD/PCCB family. In terms of assembly, acetyl-CoA carboxylase is a heterohexamer composed of biotin carboxyl carrier protein (AccB), biotin carboxylase (AccC) and two subunits each of ACCase subunit alpha (AccA) and ACCase subunit beta (AccD). The cofactor is Zn(2+).

It localises to the cytoplasm. It carries out the reaction N(6)-carboxybiotinyl-L-lysyl-[protein] + acetyl-CoA = N(6)-biotinyl-L-lysyl-[protein] + malonyl-CoA. Its pathway is lipid metabolism; malonyl-CoA biosynthesis; malonyl-CoA from acetyl-CoA: step 1/1. Component of the acetyl coenzyme A carboxylase (ACC) complex. Biotin carboxylase (BC) catalyzes the carboxylation of biotin on its carrier protein (BCCP) and then the CO(2) group is transferred by the transcarboxylase to acetyl-CoA to form malonyl-CoA. In Nostoc punctiforme (strain ATCC 29133 / PCC 73102), this protein is Acetyl-coenzyme A carboxylase carboxyl transferase subunit beta.